The primary structure comprises 279 residues: Protein phosphatase 1 regulatory subunit 3E (279 aa).

Phosphoserine occurs at positions 16 and 33. The tract at residues 28–86 (RSQRPSLEEEPEEEPGEGGTRFGARSRAHAPSRGRRARSAPAGGGGARAPRSRSPDTRK) is disordered. Over residues 51-65 (ARSRAHAPSRGRRAR) the composition is skewed to basic residues. Phosphoserine is present on S66. Residues 87–90 (RVRF) carry the PP1-binding motif motif. The region spanning 154–259 (AARLLTQRIC…NNGGRDYALR (106 aa)) is the CBM21 domain. The tract at residues 176–198 (GSARVVDLAYEKRVSVRWSADGW) is glycogen-binding motif. Positions 248–256 (WDNNGGRDY) are substrate-binding motif.

In terms of tissue distribution, expressed in skeletal muscle and heart with barely detectable levels in liver.

Acts as a glycogen-targeting subunit for PP1. PP1 is involved in glycogen metabolism and contributes to the activation of glycogen synthase leading to an increase in glycogen synthesis. This Homo sapiens (Human) protein is Protein phosphatase 1 regulatory subunit 3E (PPP1R3E).